Consider the following 251-residue polypeptide: MSDIGDWFRSIPAITRYWFAATVAVPLVGKLGLISPAYLFLWPEAFLYRFQIWRPITATFYFPVGPGTGFLYLVNLYFLYQYSTRLETGAFDGRPADYLFMLLFNWICIVITGLAMDMQLLMIPLIMSVLYVWAQLNRDMIVSFWFGTRFKACYLPWVILGFNYIIGGSVINELIGNLVGHLYFFLMFRYPMDLGGRNFLSTPQFLYRWLPSRRGGVSGFGVPPASMRRAADQNGGGGRHNWGQGFRLGDQ.

Position 2 is an N-acetylserine (Ser2). Residues 2 to 15 (SDIGDWFRSIPAIT) lie on the Cytoplasmic side of the membrane. Residues 16–31 (RYWFAATVAVPLVGKL) traverse the membrane as a helical segment. Topologically, residues 32-69 (GLISPAYLFLWPEAFLYRFQIWRPITATFYFPVGPGTG) are lumenal. The chain crosses the membrane as a helical span at residues 70-89 (FLYLVNLYFLYQYSTRLETG). Topologically, residues 90–94 (AFDGR) are cytoplasmic. The chain crosses the membrane as a helical span at residues 95–115 (PADYLFMLLFNWICIVITGLA). Over 116–122 (MDMQLLM) the chain is Lumenal. Residues 123-137 (IPLIMSVLYVWAQLN) traverse the membrane as a helical segment. The Cytoplasmic portion of the chain corresponds to 138–154 (RDMIVSFWFGTRFKACY). The chain crosses the membrane as a helical span at residues 155 to 166 (LPWVILGFNYII). Over 167-170 (GGSV) the chain is Lumenal. A helical transmembrane segment spans residues 171-189 (INELIGNLVGHLYFFLMFR). The Cytoplasmic segment spans residues 190 to 251 (YPMDLGGRNF…WGQGFRLGDQ (62 aa)). Ser201 is subject to Phosphoserine. A Phosphothreonine modification is found at Thr202. A Phosphoserine modification is found at Ser226. Positions 229–251 (RAADQNGGGGRHNWGQGFRLGDQ) are disordered. Residues 241-248 (NWGQGFRL) carry the SHP-box motif.

Belongs to the derlin family. Homotetramer. The four subunits of the tetramer are arranged in a twofold symmetry. Forms heterooligomers with DERL2 and DERL3; binding to DERL3 is poorer than that between DERL2 and DERL3. Interacts (via SHP-box motif) with VCP. Interacts with AMFR, SELENOS, SEL1L, SELENOK and SYVN1, as well as with SEL1L-SYVN1 and VCP-SELENOS protein complexes; this interaction is weaker than that observed between DERL2 and these complexes. Interacts with NGLY1 and YOD1. Does not bind to EDEM1. Interacts with DNAJB9. Interacts with RNF103. Interacts with HM13. Interacts with XBP1 isoform 1 (via luminal/ectodomain domain); the interaction obviates the need for ectodomain shedding prior HM13/SPP-mediated XBP1 isoform 1 cleavage. Interacts with the signal recognition particle/SRP and the SRP receptor; in the process of endoplasmic reticulum stress-induced pre-emptive quality control. May interact with UBXN6. Interacts with ZFAND2B; probably through VCP. Interacts with CCDC47. Interacts with C18orf32. May interact with TRAM1. Forms a complex with SVIP and VCP/p97. As to quaternary structure, (Microbial infection) Interacts with the cytomegalovirus US11 protein. Ubiquitous.

Its subcellular location is the endoplasmic reticulum membrane. In terms of biological role, functional component of endoplasmic reticulum-associated degradation (ERAD) for misfolded lumenal proteins. Forms homotetramers which encircle a large channel traversing the endoplasmic reticulum (ER) membrane. This allows the retrotranslocation of misfolded proteins from the ER into the cytosol where they are ubiquitinated and degraded by the proteasome. The channel has a lateral gate within the membrane which provides direct access to membrane proteins with no need to reenter the ER lumen first. May mediate the interaction between VCP and the misfolded protein. Also involved in endoplasmic reticulum stress-induced pre-emptive quality control, a mechanism that selectively attenuates the translocation of newly synthesized proteins into the endoplasmic reticulum and reroutes them to the cytosol for proteasomal degradation. By controlling the steady-state expression of the IGF1R receptor, indirectly regulates the insulin-like growth factor receptor signaling pathway. Functionally, (Microbial infection) In case of infection by cytomegaloviruses, it plays a central role in the export from the ER and subsequent degradation of MHC class I heavy chains via its interaction with US11 viral protein, which recognizes and associates with MHC class I heavy chains. Also participates in the degradation process of misfolded cytomegalovirus US2 protein. The polypeptide is Derlin-1 (Homo sapiens (Human)).